The chain runs to 213 residues: dITP/XTP pyrophosphatase (213 aa).

Residue 7-12 (TSNLDK) participates in substrate binding. D74 serves as the catalytic Proton acceptor. Position 74 (D74) interacts with Mg(2+). Residues S75, 165–168 (FGYD), K188, and 193–194 (HR) contribute to the substrate site.

It belongs to the HAM1 NTPase family. As to quaternary structure, homodimer. It depends on Mg(2+) as a cofactor.

It carries out the reaction XTP + H2O = XMP + diphosphate + H(+). The enzyme catalyses dITP + H2O = dIMP + diphosphate + H(+). The catalysed reaction is ITP + H2O = IMP + diphosphate + H(+). In terms of biological role, pyrophosphatase that catalyzes the hydrolysis of nucleoside triphosphates to their monophosphate derivatives, with a high preference for the non-canonical purine nucleotides XTP (xanthosine triphosphate), dITP (deoxyinosine triphosphate) and ITP. Seems to function as a house-cleaning enzyme that removes non-canonical purine nucleotides from the nucleotide pool, thus preventing their incorporation into DNA/RNA and avoiding chromosomal lesions. The protein is dITP/XTP pyrophosphatase of Campylobacter concisus (strain 13826).